A 250-amino-acid polypeptide reads, in one-letter code: 2,3-bisphosphoglycerate-dependent phosphoglycerate mutase (250 aa).

Substrate is bound by residues 10–17 (RHGESQWN), 23–24 (TG), arginine 62, 89–92 (ERHY), lysine 100, 116–117 (RR), and 185–186 (GN). Histidine 11 functions as the Tele-phosphohistidine intermediate in the catalytic mechanism. The active-site Proton donor/acceptor is the glutamate 89.

This sequence belongs to the phosphoglycerate mutase family. BPG-dependent PGAM subfamily. As to quaternary structure, homodimer.

It carries out the reaction (2R)-2-phosphoglycerate = (2R)-3-phosphoglycerate. The protein operates within carbohydrate degradation; glycolysis; pyruvate from D-glyceraldehyde 3-phosphate: step 3/5. In terms of biological role, catalyzes the interconversion of 2-phosphoglycerate and 3-phosphoglycerate. The polypeptide is 2,3-bisphosphoglycerate-dependent phosphoglycerate mutase (Shigella dysenteriae serotype 1 (strain Sd197)).